Here is a 471-residue protein sequence, read N- to C-terminus: 3-isopropylmalate dehydratase large subunit (471 aa).

[4Fe-4S] cluster is bound by residues Cys347, Cys407, and Cys410.

The protein belongs to the aconitase/IPM isomerase family. LeuC type 1 subfamily. As to quaternary structure, heterodimer of LeuC and LeuD. [4Fe-4S] cluster is required as a cofactor.

It carries out the reaction (2R,3S)-3-isopropylmalate = (2S)-2-isopropylmalate. The protein operates within amino-acid biosynthesis; L-leucine biosynthesis; L-leucine from 3-methyl-2-oxobutanoate: step 2/4. Catalyzes the isomerization between 2-isopropylmalate and 3-isopropylmalate, via the formation of 2-isopropylmaleate. The polypeptide is 3-isopropylmalate dehydratase large subunit (Anoxybacillus flavithermus (strain DSM 21510 / WK1)).